Consider the following 462-residue polypeptide: Chitinase 1 (462 aa).

The signal sequence occupies residues 1–17 (MILNLIILLAISIVASA). The region spanning 18–291 (SNIAAYWGQN…NQLHQALSGS (274 aa)) is the GH18 domain. A glycan (N-linked (GlcNAc...) asparagine) is linked at asparagine 57. The active-site Proton donor is glutamate 147.

The protein belongs to the glycosyl hydrolase 18 family. Chitinase class V subfamily.

Its subcellular location is the secreted. The catalysed reaction is Random endo-hydrolysis of N-acetyl-beta-D-glucosaminide (1-&gt;4)-beta-linkages in chitin and chitodextrins.. In terms of biological role, chitinase involved in the remodeling of chitin in the fungal cell wall. Plays a role in cell separation. The polypeptide is Chitinase 1 (CHT1) (Candida albicans (strain SC5314 / ATCC MYA-2876) (Yeast)).